Consider the following 435-residue polypeptide: 3-ketoacyl-CoA thiolase (435 aa).

Residue Cys-98 is the Acyl-thioester intermediate of the active site. Catalysis depends on proton acceptor residues His-391 and Cys-421.

It belongs to the thiolase-like superfamily. Thiolase family. In terms of assembly, heterotetramer of two alpha chains (FadJ) and two beta chains (FadI).

It localises to the cytoplasm. It carries out the reaction an acyl-CoA + acetyl-CoA = a 3-oxoacyl-CoA + CoA. It functions in the pathway lipid metabolism; fatty acid beta-oxidation. In terms of biological role, catalyzes the final step of fatty acid oxidation in which acetyl-CoA is released and the CoA ester of a fatty acid two carbons shorter is formed. This chain is 3-ketoacyl-CoA thiolase, found in Vibrio vulnificus (strain CMCP6).